Consider the following 144-residue polypeptide: Arsenate reductase ArsI1 (144 aa).

C14 acts as the Nucleophile; cysteine thioarsenate intermediate in catalysis.

This sequence belongs to the ArsC family.

It carries out the reaction [glutaredoxin]-dithiol + arsenate + glutathione + H(+) = glutathionyl-S-S-[glutaredoxin] + arsenite + H2O. Catalyzes the reduction of arsenate [As(V)] to arsenite [As(III)]. Does not constitute the major arsenate reductase in cells: essential only in the absence of ArsC (AC P74313). The polypeptide is Arsenate reductase ArsI1 (Synechocystis sp. (strain ATCC 27184 / PCC 6803 / Kazusa)).